A 326-amino-acid polypeptide reads, in one-letter code: Putative HTH-type transcriptional regulatory protein MmarC7_1702 (326 aa).

Positions 128–183 (LRETREKLKISVGELAEISRVSRKTIYKYEQNEANPSAEVAIKIEEYLDVPLIKGI) constitute an HTH cro/C1-type domain. A DNA-binding region (H-T-H motif) is located at residues 139 to 158 (VGELAEISRVSRKTIYKYEQ).

This chain is Putative HTH-type transcriptional regulatory protein MmarC7_1702, found in Methanococcus maripaludis (strain C7 / ATCC BAA-1331).